A 303-amino-acid polypeptide reads, in one-letter code: Elongation factor Ts (303 aa).

Residues 79 to 82 form an involved in Mg(2+) ion dislocation from EF-Tu region; that stretch reads TDFV.

The protein belongs to the EF-Ts family.

The protein resides in the cytoplasm. In terms of biological role, associates with the EF-Tu.GDP complex and induces the exchange of GDP to GTP. It remains bound to the aminoacyl-tRNA.EF-Tu.GTP complex up to the GTP hydrolysis stage on the ribosome. This Syntrophotalea carbinolica (strain DSM 2380 / NBRC 103641 / GraBd1) (Pelobacter carbinolicus) protein is Elongation factor Ts.